The primary structure comprises 355 residues: Peptide chain release factor 1 (355 aa).

Position 233 is an N5-methylglutamine (Q233). Basic and acidic residues predominate over residues 282-293 (RKKEQARADSRR). The disordered stretch occupies residues 282-305 (RKKEQARADSRRGQVGSGDRSERI).

The protein belongs to the prokaryotic/mitochondrial release factor family. In terms of processing, methylated by PrmC. Methylation increases the termination efficiency of RF1.

The protein localises to the cytoplasm. Peptide chain release factor 1 directs the termination of translation in response to the peptide chain termination codons UAG and UAA. The protein is Peptide chain release factor 1 of Rickettsia rickettsii (strain Iowa).